A 197-amino-acid polypeptide reads, in one-letter code: Carnitine operon protein CaiE (197 aa).

This sequence belongs to the transferase hexapeptide repeat family.

It participates in amine and polyamine metabolism; carnitine metabolism. In terms of biological role, overproduction of CaiE stimulates the activity of CaiB and CaiD. In Citrobacter koseri (strain ATCC BAA-895 / CDC 4225-83 / SGSC4696), this protein is Carnitine operon protein CaiE.